The sequence spans 376 residues: Lipid-A-disaccharide synthase (376 aa).

It belongs to the LpxB family.

It carries out the reaction a lipid X + a UDP-2-N,3-O-bis[(3R)-3-hydroxyacyl]-alpha-D-glucosamine = a lipid A disaccharide + UDP + H(+). It functions in the pathway bacterial outer membrane biogenesis; LPS lipid A biosynthesis. Its function is as follows. Condensation of UDP-2,3-diacylglucosamine and 2,3-diacylglucosamine-1-phosphate to form lipid A disaccharide, a precursor of lipid A, a phosphorylated glycolipid that anchors the lipopolysaccharide to the outer membrane of the cell. The polypeptide is Lipid-A-disaccharide synthase (Coxiella burnetii (strain Dugway 5J108-111)).